Reading from the N-terminus, the 395-residue chain is RNA demethylase ALKBH5 (395 aa).

Disordered regions lie at residues 1-28 (MAAA…AGSR) and 47-83 (AAEP…EEEA). N-acetylalanine is present on Ala-2. Lys-58 is covalently cross-linked (Glycyl lysine isopeptide (Lys-Gly) (interchain with G-Cter in ubiquitin)). Positions 60 to 83 (KYQEDSDPERSDYEEHQLQKEEEA) are enriched in basic and acidic residues. A phosphoserine mark is found at Ser-65 and Ser-70. Residues 68–117 (ERSDYEEHQLQKEEEARKVKSGIRQIRLFSQDECSKIEARIDEVVSRAEK) adopt a coiled-coil conformation. Tyr-72 carries the post-translational modification Phosphotyrosine. Lys-87 participates in a covalent cross-link: Glycyl lysine isopeptide (Lys-Gly) (interchain with G-Cter in SUMO1). The residue at position 88 (Ser-88) is a Phosphoserine. N6-acetyllysine is present on Lys-133. Tyr-140 is an active-site residue. Residues Asn-194, Tyr-196, and His-205 each contribute to the 2-oxoglutarate site. Cys-231 and Cys-268 are joined by a disulfide. The residue at position 236 (Lys-236) is an N6-acetyllysine. The 2-oxoglutarate site is built by His-267 and Arg-278. Residues 294–395 (ETKSLSSSTL…PTRKVKMRRH (102 aa)) form a disordered region. Positions 296–306 (KSLSSSTLPPS) are enriched in low complexity. Lys-322 is covalently cross-linked (Glycyl lysine isopeptide (Lys-Gly) (interchain with G-Cter in SUMO1)). Position 326 is a phosphoserine (Ser-326). Lys-329 is covalently cross-linked (Glycyl lysine isopeptide (Lys-Gly) (interchain with G-Cter in SUMO2)). Positions 329–350 (KADPDAAHRPRILEMDKEENRR) are enriched in basic and acidic residues. Arg-360 is modified (omega-N-methylarginine). Phosphoserine occurs at positions 362, 372, 375, and 385.

Belongs to the alkB family. As to quaternary structure, monomer. Interacts with RBM33; promoting desumoylation by SENP1 and recruitment to N(6)-methyladenosine-containing mRNAs. Interacts (when acetylated by KAT8) with PSPC1; interaction facilitates recognition of N(6)-methyladenosine (m6A) mRNA. Fe(2+) is required as a cofactor. Post-translationally, phosphorylated at Ser-88 and Ser-326 in response to reactive oxygen species (ROS), promoting sumoylation and inactivation. Acetylated by KAT8 at Lys-236, promoting interaction with PSPC1, thereby facilitating recognition of N(6)-methyladenosine (m6A) mRNA by ALKBH5. Deacetylated at Lys-236 by HDAC7. In terms of processing, sumoylated at Lys-87 and Lys-322 by PIAS4 following phosphorylation at Ser-88 and Ser-326 in response to reactive oxygen species (ROS), inhibiting the RNA demethylase activity. Desumoylated by SENP1; relieving RNA demethylase inhibition, leading to N(6)-methyladenosine-containing mRNAs demethylation. Post-translationally, ubiquitinated at Lys-58 via 'Lys-48'-linked polyubiquitin chain, leading to its degradation by the proteasome. Deubiquitinated at Lys-58 by USP9X, promoting its stabilizazion.

It is found in the nucleus speckle. The catalysed reaction is an N(6)-methyladenosine in mRNA + 2-oxoglutarate + O2 = an adenosine in mRNA + formaldehyde + succinate + CO2. RNA demethylase activity is inhibited following sumoylation. Inhibition is relieved following desumoylation. Dioxygenase that specifically demethylates N(6)-methyladenosine (m6A) RNA, the most prevalent internal modification of messenger RNA (mRNA) in higher eukaryotes. Demethylates RNA by oxidative demethylation, which requires molecular oxygen, alpha-ketoglutarate and iron. Demethylation of m6A mRNA affects mRNA processing, translation and export. Can also demethylate N(6)-methyladenosine in single-stranded DNA (in vitro). Required for the late meiotic and haploid phases of spermatogenesis by mediating m6A demethylation in spermatocytes and round spermatids: m6A demethylation of target transcripts is required for correct splicing and the production of longer 3'-UTR mRNAs in male germ cells. Involved in paraspeckle assembly, a nuclear membraneless organelle, by undergoing liquid-liquid phase separation. Paraspeckle assembly is coupled with m6A demethylation of RNAs, such as NEAT1 non-coding RNA. Also acts as a negative regulator of T-cell development: inhibits gamma-delta T-cell proliferation via demethylation of JAG1 and NOTCH2 transcripts. Inhibits regulatory T-cell (Treg) recruitment by mediating demethylation and destabilization of CCL28 mRNAs. In Rattus norvegicus (Rat), this protein is RNA demethylase ALKBH5 (Alkbh5).